The chain runs to 400 residues: Enoyl-[acyl-carrier-protein] reductase [NADH] (400 aa).

NAD(+) contacts are provided by residues glycine 48–tyrosine 53, phenylalanine 74–glutamate 75, aspartate 111–alanine 112, and leucine 139–alanine 140. Tyrosine 225 contributes to the substrate binding site. Residue tyrosine 235 is the Proton donor of the active site. NAD(+) is bound by residues lysine 244 and valine 273 to threonine 275.

Belongs to the TER reductase family. As to quaternary structure, monomer.

It catalyses the reaction a 2,3-saturated acyl-[ACP] + NAD(+) = a (2E)-enoyl-[ACP] + NADH + H(+). It participates in lipid metabolism; fatty acid biosynthesis. Functionally, involved in the final reduction of the elongation cycle of fatty acid synthesis (FAS II). Catalyzes the reduction of a carbon-carbon double bond in an enoyl moiety that is covalently linked to an acyl carrier protein (ACP). The protein is Enoyl-[acyl-carrier-protein] reductase [NADH] of Burkholderia vietnamiensis (strain G4 / LMG 22486) (Burkholderia cepacia (strain R1808)).